The primary structure comprises 251 residues: Putative F-box protein L166 (251 aa).

One can recognise an F-box domain in the interval Met1–Ile46. Positions Pro188–Arg251 are disordered. A compositionally biased stretch (polar residues) spans Thr202–Ile217. Residues Lys241–Arg251 show a composition bias toward basic residues.

The chain is Putative F-box protein L166 from Acanthamoeba polyphaga (Amoeba).